Consider the following 545-residue polypeptide: Triacylglycerol lipase ptl1 (545 aa).

The PNPLA domain maps to 182–358; it reads LYFNGGTAFG…EVCTPKNFIW (177 aa). The GXSXG motif lies at 213–217; it reads GCASG.

Its subcellular location is the lipid droplet. The catalysed reaction is a triacylglycerol + H2O = a diacylglycerol + a fatty acid + H(+). In terms of biological role, lipid particle-localized triacylglycerol (TAG) lipase. The lipid droplet/particle is a lipid storage compartment which serves as a depot of energy and building blocks for membrane lipid biosynthesis. Involved in the mobilization of the non-polar storage lipids triacylglycerols (TAGs) from lipid particles by hydrolysis of TAGs, releasing and supplying specific fatty acids to the appropriate metabolic pathways. The protein is Triacylglycerol lipase ptl1 (ptl1) of Schizosaccharomyces pombe (strain 972 / ATCC 24843) (Fission yeast).